A 160-amino-acid chain; its full sequence is Transcription elongation factor GreA (160 aa).

Residues 12 to 76 (EGVKKLEEEL…QLENMLKNAS (65 aa)) adopt a coiled-coil conformation.

This sequence belongs to the GreA/GreB family.

Its function is as follows. Necessary for efficient RNA polymerase transcription elongation past template-encoded arresting sites. The arresting sites in DNA have the property of trapping a certain fraction of elongating RNA polymerases that pass through, resulting in locked ternary complexes. Cleavage of the nascent transcript by cleavage factors such as GreA or GreB allows the resumption of elongation from the new 3'terminus. GreA releases sequences of 2 to 3 nucleotides. The sequence is that of Transcription elongation factor GreA from Clostridium botulinum (strain Hall / ATCC 3502 / NCTC 13319 / Type A).